We begin with the raw amino-acid sequence, 220 residues long: Orotidine 5'-phosphate decarboxylase (220 aa).

Substrate contacts are provided by residues Asp12, Lys34, 60–69 (DFKVADIPNT), Ser117, 170–180 (PGVGAQGGKAS), Gly193, and Arg194. Lys62 (proton donor) is an active-site residue.

The protein belongs to the OMP decarboxylase family. Type 1 subfamily. Homodimer.

The enzyme catalyses orotidine 5'-phosphate + H(+) = UMP + CO2. It participates in pyrimidine metabolism; UMP biosynthesis via de novo pathway; UMP from orotate: step 2/2. Functionally, catalyzes the decarboxylation of orotidine 5'-monophosphate (OMP) to uridine 5'-monophosphate (UMP). The sequence is that of Orotidine 5'-phosphate decarboxylase from Methanosarcina mazei (strain ATCC BAA-159 / DSM 3647 / Goe1 / Go1 / JCM 11833 / OCM 88) (Methanosarcina frisia).